The sequence spans 188 residues: Elongation factor P (188 aa).

An N6-(3,6-diaminohexanoyl)-5-hydroxylysine modification is found at lysine 34.

It belongs to the elongation factor P family. Post-translationally, may be beta-lysylated on the epsilon-amino group of Lys-34 by the combined action of EpmA and EpmB, and then hydroxylated on the C5 position of the same residue by EpmC (if this protein is present). Lysylation is critical for the stimulatory effect of EF-P on peptide-bond formation. The lysylation moiety may extend toward the peptidyltransferase center and stabilize the terminal 3-CCA end of the tRNA. Hydroxylation of the C5 position on Lys-34 may allow additional potential stabilizing hydrogen-bond interactions with the P-tRNA.

Its subcellular location is the cytoplasm. The protein operates within protein biosynthesis; polypeptide chain elongation. In terms of biological role, involved in peptide bond synthesis. Alleviates ribosome stalling that occurs when 3 or more consecutive Pro residues or the sequence PPG is present in a protein, possibly by augmenting the peptidyl transferase activity of the ribosome. Modification of Lys-34 is required for alleviation. In Enterobacter sp. (strain 638), this protein is Elongation factor P.